The primary structure comprises 729 residues: Fatty acid oxidation complex subunit alpha (729 aa).

An enoyl-CoA hydratase/isomerase region spans residues Met-1–Lys-189. Asp-296 provides a ligand contact to substrate. The segment at Glu-311 to Ala-729 is 3-hydroxyacyl-CoA dehydrogenase. NAD(+) is bound by residues Met-324, Asp-343, Val-400 to Glu-402, Lys-407, and Ser-429. His-450 acts as the For 3-hydroxyacyl-CoA dehydrogenase activity in catalysis. Asn-453 is an NAD(+) binding site. Residues Asn-500 and Tyr-660 each coordinate substrate. The disordered stretch occupies residues Arg-708–Ala-729.

In the N-terminal section; belongs to the enoyl-CoA hydratase/isomerase family. The protein in the C-terminal section; belongs to the 3-hydroxyacyl-CoA dehydrogenase family. Heterotetramer of two alpha chains (FadB) and two beta chains (FadA).

It carries out the reaction a (3S)-3-hydroxyacyl-CoA + NAD(+) = a 3-oxoacyl-CoA + NADH + H(+). The catalysed reaction is a (3S)-3-hydroxyacyl-CoA = a (2E)-enoyl-CoA + H2O. The enzyme catalyses a 4-saturated-(3S)-3-hydroxyacyl-CoA = a (3E)-enoyl-CoA + H2O. It catalyses the reaction (3S)-3-hydroxybutanoyl-CoA = (3R)-3-hydroxybutanoyl-CoA. It carries out the reaction a (3Z)-enoyl-CoA = a 4-saturated (2E)-enoyl-CoA. The catalysed reaction is a (3E)-enoyl-CoA = a 4-saturated (2E)-enoyl-CoA. Its pathway is lipid metabolism; fatty acid beta-oxidation. Its function is as follows. Involved in the aerobic and anaerobic degradation of long-chain fatty acids via beta-oxidation cycle. Catalyzes the formation of 3-oxoacyl-CoA from enoyl-CoA via L-3-hydroxyacyl-CoA. It can also use D-3-hydroxyacyl-CoA and cis-3-enoyl-CoA as substrate. This Salmonella gallinarum (strain 287/91 / NCTC 13346) protein is Fatty acid oxidation complex subunit alpha.